The sequence spans 233 residues: Metallo-beta-lactamase domain-containing protein 1 (233 aa).

The Zn(2+) site is built by His-96, His-98, Asp-100, His-101, His-152, Asp-174, and His-213.

This sequence belongs to the metallo-beta-lactamase superfamily. Glyoxalase II family. In terms of assembly, homodimer. Requires Zn(2+) as cofactor.

It localises to the cytoplasm. Its subcellular location is the cytosol. The protein localises to the nucleus. It catalyses the reaction a ribonucleotidyl-ribonucleotide-RNA + H2O = a 3'-end ribonucleotide-RNA + a 5'-end 5'-phospho-ribonucleoside-RNA + H(+). Functionally, endoribonuclease that catalyzes the hydrolysis of histone-coding pre-mRNA 3'-end. Involved in histone pre-mRNA processing during the S-phase of the cell cycle, which is required for entering/progressing through S-phase. Cleaves histone pre-mRNA at a major and a minor cleavage site after the 5'-ACCCA-3' and the 5'-ACCCACA-3' sequence, respectively, and located downstream of the stem-loop. May require the presence of the HDE element located at the histone pre-RNA 3'-end to avoid non-specific cleavage. The chain is Metallo-beta-lactamase domain-containing protein 1 (mblac1) from Xenopus laevis (African clawed frog).